The following is a 269-amino-acid chain: tRNA pseudouridine synthase A (269 aa).

The active-site Nucleophile is Asp51. Tyr109 is a substrate binding site.

It belongs to the tRNA pseudouridine synthase TruA family. As to quaternary structure, homodimer.

It catalyses the reaction uridine(38/39/40) in tRNA = pseudouridine(38/39/40) in tRNA. Formation of pseudouridine at positions 38, 39 and 40 in the anticodon stem and loop of transfer RNAs. This chain is tRNA pseudouridine synthase A, found in Haemophilus influenzae (strain 86-028NP).